Consider the following 202-residue polypeptide: Sperm-specific H1/protamine-like protein type 1 (202 aa).

Positions 1 to 35 are enriched in basic residues; the sequence is MPSPSRKSRSRSRSRSKSPKRSPAKKARKTPKKPR. 2 disordered regions span residues 1–46 and 104–202; these read MPSP…PTTL and KTSA…QFAL. The H15 domain maps to 41–120; the sequence is KKPTTLSMIV…GATGSFRVGK (80 aa). The segment covering 126–156 has biased composition (basic residues); that stretch reads KKAKKAKSPKKKSSKKSKNKSNNAKAKKSPK. The span at 177 to 187 shows a compositional bias: low complexity; the sequence is GARYPFRYQAY.

OE1 and OE3 are produced by post-translational cleavage of a common precursor. In terms of tissue distribution, sperm.

Its subcellular location is the nucleus. It localises to the chromosome. Linker histones are implicated in chromatin remodeling and/or transcriptional regulation during spermiogenesis, the process of spermatid maturation into spermatozoa. Protamines substitute for histones in the chromatin of sperm during the haploid phase of spermatogenesis. They compact sperm DNA into a highly condensed, stable and inactive complex. This is Sperm-specific H1/protamine-like protein type 1 from Ostrea edulis (Native oyster).